The primary structure comprises 313 residues: Ornithine carbamoyltransferase (313 aa).

Carbamoyl phosphate is bound by residues 61-64 (STRT), Gln-88, Arg-112, and 139-142 (HPCQ). L-ornithine is bound by residues Asn-170, Asp-228, and 232–233 (SM). Residues 268-269 (CL) and Arg-296 each bind carbamoyl phosphate.

Belongs to the aspartate/ornithine carbamoyltransferase superfamily. OTCase family.

It is found in the cytoplasm. It carries out the reaction carbamoyl phosphate + L-ornithine = L-citrulline + phosphate + H(+). It functions in the pathway amino-acid biosynthesis; L-arginine biosynthesis; L-arginine from L-ornithine and carbamoyl phosphate: step 1/3. Its function is as follows. Reversibly catalyzes the transfer of the carbamoyl group from carbamoyl phosphate (CP) to the N(epsilon) atom of ornithine (ORN) to produce L-citrulline. In Bordetella avium (strain 197N), this protein is Ornithine carbamoyltransferase.